A 278-amino-acid polypeptide reads, in one-letter code: Shikimate dehydrogenase (NADP(+)) (278 aa).

Residues 14 to 16 (SKS) and T61 contribute to the shikimate site. K65 serves as the catalytic Proton acceptor. Shikimate contacts are provided by N86 and D102. Residues 127–131 (GAGGA), 151–156 (NRTASK), and M221 contribute to the NADP(+) site. Residue Y223 coordinates shikimate. G245 lines the NADP(+) pocket.

The protein belongs to the shikimate dehydrogenase family. As to quaternary structure, homodimer.

The catalysed reaction is shikimate + NADP(+) = 3-dehydroshikimate + NADPH + H(+). Its pathway is metabolic intermediate biosynthesis; chorismate biosynthesis; chorismate from D-erythrose 4-phosphate and phosphoenolpyruvate: step 4/7. Involved in the biosynthesis of the chorismate, which leads to the biosynthesis of aromatic amino acids. Catalyzes the reversible NADPH linked reduction of 3-dehydroshikimate (DHSA) to yield shikimate (SA). This is Shikimate dehydrogenase (NADP(+)) from Saccharophagus degradans (strain 2-40 / ATCC 43961 / DSM 17024).